The sequence spans 185 residues: Ribosome-recycling factor (185 aa).

It belongs to the RRF family.

It is found in the cytoplasm. Its function is as follows. Responsible for the release of ribosomes from messenger RNA at the termination of protein biosynthesis. May increase the efficiency of translation by recycling ribosomes from one round of translation to another. This chain is Ribosome-recycling factor, found in Ehrlichia chaffeensis (strain ATCC CRL-10679 / Arkansas).